A 159-amino-acid polypeptide reads, in one-letter code: SsrA-binding protein (159 aa).

Positions 133-159 (KKLHDKRETSKERDWNRQKNRLLKERG) are disordered. Over residues 137 to 159 (DKRETSKERDWNRQKNRLLKERG) the composition is skewed to basic and acidic residues.

Belongs to the SmpB family.

It localises to the cytoplasm. Its function is as follows. Required for rescue of stalled ribosomes mediated by trans-translation. Binds to transfer-messenger RNA (tmRNA), required for stable association of tmRNA with ribosomes. tmRNA and SmpB together mimic tRNA shape, replacing the anticodon stem-loop with SmpB. tmRNA is encoded by the ssrA gene; the 2 termini fold to resemble tRNA(Ala) and it encodes a 'tag peptide', a short internal open reading frame. During trans-translation Ala-aminoacylated tmRNA acts like a tRNA, entering the A-site of stalled ribosomes, displacing the stalled mRNA. The ribosome then switches to translate the ORF on the tmRNA; the nascent peptide is terminated with the 'tag peptide' encoded by the tmRNA and targeted for degradation. The ribosome is freed to recommence translation, which seems to be the essential function of trans-translation. The sequence is that of SsrA-binding protein from Sinorhizobium medicae (strain WSM419) (Ensifer medicae).